We begin with the raw amino-acid sequence, 254 residues long: Nodulation protein J (254 aa).

6 consecutive transmembrane segments (helical) span residues 25–45 (ASVLGSVIDPLIMLFGLGVGL), 60–80 (FLACGLILTSAMSASNYEMLY), 106–126 (LIGEVLWAAYEGVVAGTIVAV), 133–153 (YIPGWSVIYILPDILFVALIF), 169–189 (LFAFYQSIAIAPLVFLSGVIV), and 230–250 (LLLSLLYASVMVFISAKVICV). The ABC transmembrane type-2 domain maps to 25–251 (ASVLGSVIDP…FISAKVICVR (227 aa)).

This sequence belongs to the ABC-2 integral membrane protein family. Lipooligosaccharide exporter (TC 3.A.1.102) subfamily. As to quaternary structure, the complex is composed of two ATP-binding proteins (NodI) and two transmembrane proteins (NodJ).

Its subcellular location is the cell inner membrane. Its function is as follows. Part of the ABC transporter complex NodIJ involved in the export of the nodulation factors (Nod factors), the bacterial signal molecules that induce symbiosis and subsequent nodulation induction. Nod factors are LCO (lipo-chitin oligosaccharide), a modified beta-1,4-linked N-acetylglucosamine oligosaccharide. This subunit encodes the transporter. The protein is Nodulation protein J (nodJ) of Azorhizobium caulinodans (strain ATCC 43989 / DSM 5975 / JCM 20966 / LMG 6465 / NBRC 14845 / NCIMB 13405 / ORS 571).